Consider the following 154-residue polypeptide: Transcription antitermination protein NusB (154 aa).

This sequence belongs to the NusB family.

Involved in transcription antitermination. Required for transcription of ribosomal RNA (rRNA) genes. Binds specifically to the boxA antiterminator sequence of the ribosomal RNA (rrn) operons. The chain is Transcription antitermination protein NusB from Methylobacillus flagellatus (strain ATCC 51484 / DSM 6875 / VKM B-1610 / KT).